The sequence spans 490 residues: Actin-related protein 6 (490 aa).

It belongs to the actin family. ARP6 subfamily.

The protein resides in the cytoplasm. It localises to the cytoskeleton. In Dictyostelium discoideum (Social amoeba), this protein is Actin-related protein 6.